A 261-amino-acid chain; its full sequence is Global transcriptional regulator CodY (261 aa).

The tract at residues 1–159 is GAF domain; the sequence is MANLLDKTRK…ASTVVGLQLL (159 aa). A DNA-binding region (H-T-H motif) is located at residues 207 to 226; sequence ASVIADRIGITRSVIVNALR.

Belongs to the CodY family.

It is found in the cytoplasm. In terms of biological role, DNA-binding global transcriptional regulator which is involved in the adaptive response to starvation and acts by directly or indirectly controlling the expression of numerous genes in response to nutrient availability. During rapid exponential growth, CodY is highly active and represses genes whose products allow adaptation to nutrient depletion. This chain is Global transcriptional regulator CodY, found in Streptococcus thermophilus (strain CNRZ 1066).